Reading from the N-terminus, the 253-residue chain is Indole-3-glycerol phosphate synthase (253 aa).

The protein belongs to the TrpC family.

It carries out the reaction 1-(2-carboxyphenylamino)-1-deoxy-D-ribulose 5-phosphate + H(+) = (1S,2R)-1-C-(indol-3-yl)glycerol 3-phosphate + CO2 + H2O. Its pathway is amino-acid biosynthesis; L-tryptophan biosynthesis; L-tryptophan from chorismate: step 4/5. This is Indole-3-glycerol phosphate synthase from Bacillus cereus (strain G9842).